The sequence spans 382 residues: Anhydro-N-acetylmuramic acid kinase (382 aa).

Residue 9–16 participates in ATP binding; it reads GTSLDGID.

Belongs to the anhydro-N-acetylmuramic acid kinase family.

The catalysed reaction is 1,6-anhydro-N-acetyl-beta-muramate + ATP + H2O = N-acetyl-D-muramate 6-phosphate + ADP + H(+). It functions in the pathway amino-sugar metabolism; 1,6-anhydro-N-acetylmuramate degradation. It participates in cell wall biogenesis; peptidoglycan recycling. In terms of biological role, catalyzes the specific phosphorylation of 1,6-anhydro-N-acetylmuramic acid (anhMurNAc) with the simultaneous cleavage of the 1,6-anhydro ring, generating MurNAc-6-P. Is required for the utilization of anhMurNAc either imported from the medium or derived from its own cell wall murein, and thus plays a role in cell wall recycling. This chain is Anhydro-N-acetylmuramic acid kinase, found in Bacillus cereus (strain AH187).